Reading from the N-terminus, the 638-residue chain is UvrABC system protein C (638 aa).

The GIY-YIG domain occupies 20 to 97 (ECAGVYQMFD…IKKFQPKFNI (78 aa)). Residues 209-244 (KELQENLSKKMEELSSHMYFEEAAEIRDRIKALSYV) enclose the UVR domain.

The protein belongs to the UvrC family. In terms of assembly, interacts with UvrB in an incision complex.

Its subcellular location is the cytoplasm. Functionally, the UvrABC repair system catalyzes the recognition and processing of DNA lesions. UvrC both incises the 5' and 3' sides of the lesion. The N-terminal half is responsible for the 3' incision and the C-terminal half is responsible for the 5' incision. This Rickettsia canadensis (strain McKiel) protein is UvrABC system protein C.